A 234-amino-acid polypeptide reads, in one-letter code: HTH-type transcriptional regulator ArcR (234 aa).

Residue 40-129 coordinates a nucleoside 3',5'-cyclic phosphate; sequence VRHYTKGQVI…MAFLCKANDD (90 aa). Residues 155-228 enclose the HTH crp-type domain; the sequence is KFAKDRIIKL…HKNWLVSKHL (74 aa). A DNA-binding region (H-T-H motif) is located at residues 188–207; the sequence is IQLMSDMAGISRETAGHIIH.

Its subcellular location is the cytoplasm. Functionally, positively regulates the expression of the arcABDCR operon under anaerobic conditions, thus playing an essential role in arginine catabolism. May also control the expression of genes encoding proteins which are involved in anaerobic metabolism. Can bind cyclic AMP. This chain is HTH-type transcriptional regulator ArcR (arcR), found in Staphylococcus aureus (strain MSSA476).